A 143-amino-acid polypeptide reads, in one-letter code: Hemoglobin anodic subunit alpha (143 aa).

N-acetylserine is present on Ser2. Residues 2-143 (SLSAKDMAVV…FTLALSERYR (142 aa)) enclose the Globin domain. His60 is an O2 binding site. Heme b is bound at residue His89.

Belongs to the globin family. In terms of assembly, heterotetramer of two alpha chains and two beta chains. In terms of tissue distribution, red blood cells.

In terms of biological role, involved in oxygen transport from gills to the various peripheral tissues. The polypeptide is Hemoglobin anodic subunit alpha (hba) (Anguilla anguilla (European freshwater eel)).